The following is a 550-amino-acid chain: Protein UshA (550 aa).

The N-terminal stretch at 1–25 (MKFLKRGVALALLAAFALTTQPAQA) is a signal peptide. Zn(2+)-binding residues include D41, H43, D84, N116, H217, H252, and Q254. C258 and C275 form a disulfide bridge. Substrate is bound by residues F429 and 498–504 (FNATGGD).

Belongs to the 5'-nucleotidase family. In terms of assembly, monomer. The cofactor is Zn(2+).

Its subcellular location is the periplasm. It carries out the reaction UDP-sugar + H2O = UMP + alpha-D-aldose 1-phosphate.. It catalyses the reaction a ribonucleoside 5'-phosphate + H2O = a ribonucleoside + phosphate. Degradation of external UDP-glucose to uridine monophosphate and glucose-1-phosphate, which can then be used by the cell. The sequence is that of Protein UshA (ushA) from Salmonella pullorum.